Here is a 239-residue protein sequence, read N- to C-terminus: Probable transcriptional regulatory protein BLi00754/BL02339 (239 aa).

It belongs to the TACO1 family. YeeN subfamily.

It is found in the cytoplasm. The protein is Probable transcriptional regulatory protein BLi00754/BL02339 of Bacillus licheniformis (strain ATCC 14580 / DSM 13 / JCM 2505 / CCUG 7422 / NBRC 12200 / NCIMB 9375 / NCTC 10341 / NRRL NRS-1264 / Gibson 46).